Consider the following 403-residue polypeptide: Acetate kinase (403 aa).

Asn7 is a binding site for Mg(2+). ATP is bound at residue Lys14. Residue Arg90 participates in substrate binding. The Proton donor/acceptor role is filled by Asp147. ATP-binding positions include 207–211 (HIGNG), 283–285 (DMR), and 331–335 (GVGEN). Glu386 is a binding site for Mg(2+).

It belongs to the acetokinase family. In terms of assembly, homodimer. Requires Mg(2+) as cofactor. Mn(2+) is required as a cofactor.

It is found in the cytoplasm. The enzyme catalyses acetate + ATP = acetyl phosphate + ADP. It functions in the pathway metabolic intermediate biosynthesis; acetyl-CoA biosynthesis; acetyl-CoA from acetate: step 1/2. Its function is as follows. Catalyzes the formation of acetyl phosphate from acetate and ATP. Can also catalyze the reverse reaction. This is Acetate kinase from Thermotoga petrophila (strain ATCC BAA-488 / DSM 13995 / JCM 10881 / RKU-1).